The primary structure comprises 621 residues: Chaperone protein HscA homolog (621 aa).

Belongs to the heat shock protein 70 family.

In terms of biological role, chaperone involved in the maturation of iron-sulfur cluster-containing proteins. Has a low intrinsic ATPase activity which is markedly stimulated by HscB. This chain is Chaperone protein HscA homolog, found in Azotobacter vinelandii (strain DJ / ATCC BAA-1303).